Consider the following 479-residue polypeptide: Adenylate kinase 8 (479 aa).

Adenylate kinase stretches follow at residues 58-258 (PKVV…TYVQ) and 269-471 (PKVL…SGII). Position 67–72 (67–72 (ASGKTT)) interacts with ATP. The interval 87-113 (TKESLLEREFSRLSVEAKSYYQVYKKI) is NMP 1. Residues 140 to 143 (GIPE), Q147, and R203 each bind AMP. Residues 177 to 206 (GKRIDPVTGEIYHTTFDWPPEPEIQNRLRQ) form an LID 1 region. An ATP-binding site is contributed by 278 to 283 (GSGKRL). Residues 298 to 327 (SCGQLLKEAVAAKSSFGELIQPFFEKRMTV) are NMP 2. AMP is bound by residues 325-327 (MTV), 354-357 (GFPR), and Q361. Positions 391–424 (LRRTDPVTGERFHLMYKPPPTIEVQVRLLQNPKD) are LID 2. R392 contributes to the ATP binding site.

The protein belongs to the adenylate kinase family. As to quaternary structure, interacts with CFAP45 and CFAP52; CFAP45 and AK8 dimerization may create a cavity at the interface of the dimer that can accommodate AMP.

It localises to the cytoplasm. It is found in the cytosol. The protein resides in the cytoskeleton. The protein localises to the cilium axoneme. The enzyme catalyses AMP + ATP = 2 ADP. It catalyses the reaction a 2'-deoxyribonucleoside 5'-diphosphate + ATP = a 2'-deoxyribonucleoside 5'-triphosphate + ADP. It carries out the reaction a ribonucleoside 5'-diphosphate + ATP = a ribonucleoside 5'-triphosphate + ADP. Its function is as follows. Nucleoside monophosphate (NMP) kinase that catalyzes the reversible transfer of the terminal phosphate group between nucleoside triphosphates and monophosphates. Has highest activity toward AMP, and weaker activity toward dAMP, CMP and dCMP. Also displays broad nucleoside diphosphate kinase activity. The chain is Adenylate kinase 8 (Ak8) from Mus musculus (Mouse).